A 181-amino-acid polypeptide reads, in one-letter code: High mobility group protein B4 (181 aa).

The HMG box 1 DNA-binding region spans 9–79 (PKVNVSSYIH…RYQQEMMNYI (71 aa)). Basic residues predominate over residues 80 to 89 (GKRRKRRKRD). The segment at 80–100 (GKRRKRRKRDPKAPRKPPSSF) is disordered. A DNA-binding region (HMG box 2) is located at residues 93–161 (PRKPPSSFLL…KYFEEQEAYR (69 aa)).

Belongs to the HMGB family. Expressed in adult germ cells (at protein level).

The protein localises to the nucleus. It is found in the chromosome. The polypeptide is High mobility group protein B4 (Hmgb4) (Mus musculus (Mouse)).